The following is a 282-amino-acid chain: V-set domain-containing T-cell activation inhibitor 1 (282 aa).

A signal peptide spans 1–24 (MASLGQIIFWSIINVIIILAGAIV). 2 Ig-like V-type domains span residues 35–144 (HFIT…ANLE) and 153–241 (PEIN…IKVT). 2 disulfides stabilise this stretch: C56/C130 and C168/C225. A glycan (N-linked (GlcNAc...) asparagine) is linked at N216. G257 carries GPI-anchor amidated glycine lipidation. A propeptide spans 258 to 282 (PSPCVSSVSAAGWALLSLSCCLMLR) (removed in mature form).

Belongs to the immunoglobulin superfamily. BTN/MOG family. N-glycosylated.

The protein resides in the cell membrane. Its function is as follows. Negatively regulates T-cell-mediated immune response by inhibiting T-cell activation, proliferation, cytokine production and development of cytotoxicity. When expressed on the cell surface of tumor macrophages, plays an important role, together with regulatory T-cells (Treg), in the suppression of tumor-associated antigen-specific T-cell immunity. Involved in promoting epithelial cell transformation. In Rattus norvegicus (Rat), this protein is V-set domain-containing T-cell activation inhibitor 1.